We begin with the raw amino-acid sequence, 124 residues long: Histone H2B 1/2 (124 aa).

Positions 1-32 are disordered; sequence MPEPAKAAPKKGSKKAVTKTAGKGGKKRKRTR. N6-acetyllysine is present on residues Lys-6 and Lys-11. The span at 8-17 shows a compositional bias: basic residues; it reads APKKGSKKAV. Ser-13 carries the phosphoserine modification. Residues Lys-14 and Lys-19 each carry the N6-acetyllysine modification. Ser-111 carries O-linked (GlcNAc) serine glycosylation. Lys-119 is covalently cross-linked (Glycyl lysine isopeptide (Lys-Gly) (interchain with G-Cter in ubiquitin)).

This sequence belongs to the histone H2B family. As to quaternary structure, the nucleosome is a histone octamer containing two molecules each of H2A, H2B, H3 and H4 assembled in one H3-H4 heterotetramer and two H2A-H2B heterodimers. The octamer wraps approximately 147 bp of DNA. In terms of processing, monoubiquitination of Lys-119 by the BRE1 gives a specific tag for epigenetic transcriptional activation and is also prerequisite for histone H3 'Lys-4' and 'Lys-79' methylation. Phosphorylated during apoptosis; which facilitates apoptotic chromatin condensation. Post-translationally, glcNAcylation at Ser-111 promotes monoubiquitination of Lys-119. It fluctuates in response to extracellular glucose, and associates with transcribed genes.

It localises to the nucleus. Its subcellular location is the chromosome. Its function is as follows. Core component of nucleosome. Nucleosomes wrap and compact DNA into chromatin, limiting DNA accessibility to the cellular machineries which require DNA as a template. Histones thereby play a central role in transcription regulation, DNA repair, DNA replication and chromosomal stability. DNA accessibility is regulated via a complex set of post-translational modifications of histones, also called histone code, and nucleosome remodeling. This Danio rerio (Zebrafish) protein is Histone H2B 1/2.